Reading from the N-terminus, the 159-residue chain is Transcription elongation factor GreA (159 aa).

Positions 1 to 76 form a coiled coil; that stretch reads MAEEKEVVLT…SLEKTLKKAR (76 aa).

This sequence belongs to the GreA/GreB family.

Necessary for efficient RNA polymerase transcription elongation past template-encoded arresting sites. The arresting sites in DNA have the property of trapping a certain fraction of elongating RNA polymerases that pass through, resulting in locked ternary complexes. Cleavage of the nascent transcript by cleavage factors such as GreA or GreB allows the resumption of elongation from the new 3'terminus. GreA releases sequences of 2 to 3 nucleotides. This Syntrophomonas wolfei subsp. wolfei (strain DSM 2245B / Goettingen) protein is Transcription elongation factor GreA.